We begin with the raw amino-acid sequence, 611 residues long: Protein halfway (611 aa).

The first 22 residues, 1-22, serve as a signal peptide directing secretion; the sequence is MLAYTHGTWLLLLLLLVAGACA. Disordered stretches follow at residues 31–64, 90–132, and 154–185; these read DPAA…LKED, SLAE…AAPE, and GRAE…CQCR. The span at 43–59 shows a compositional bias: basic residues; the sequence is AHAHPQARHHHHAHPHA. Over residues 90–101 the composition is skewed to polar residues; the sequence is SLAETQSMSDPG. Over residues 102–123 the composition is skewed to low complexity; sequence SVTDTTSTSTSHSTSTTSTTSP. A compositionally biased stretch (polar residues) spans 159-183; that stretch reads SEGQGSTVAQSEAQNRGGQGNSQCQ. N-linked (GlcNAc...) asparagine glycosylation is found at Asn-221, Asn-246, Asn-264, and Asn-269. 4 LRR repeats span residues 236 to 257, 259 to 280, 283 to 304, and 313 to 334; these read SLQS…FPRL, ALKC…AVKD, HLEF…NQNK, and NMRM…NFLN. One can recognise an LRRNT domain in the interval 361-416; the sequence is ENRKRCVTNCPVIPNYGSCNCTLENIMIIQDNQSKPQCHVDCSNLGLVELPQRLPD. 3 LRR repeats span residues 417-438, 443-464, and 468-489; these read NTFM…FHTN, NINR…EGTK, and TFQR…FLNN. Positions 505–554 constitute an LRRCT domain; sequence NKLQCDCNSAKTLQNWLKERSSDIPDYMEIRCRNMPQRVIELQEAKLCQS.

Has a role in the ecdysone induced cascade; probably indirect control of 'late' ecdysone genes. The polypeptide is Protein halfway (Drosophila melanogaster (Fruit fly)).